The following is a 310-amino-acid chain: Putative olfactory receptor 7A2 (310 aa).

Over 1-26 (MVKAGNETQISEFLLLGFSEKQELQP) the chain is Extracellular. An N-linked (GlcNAc...) asparagine glycan is attached at Asn-6. Residues 27–47 (FLFGLFLSMYLVTVLGNLLII) form a helical membrane-spanning segment. Topologically, residues 48 to 55 (LAAISDSC) are cytoplasmic. The chain crosses the membrane as a helical span at residues 56-76 (LHTPMYFFLSNLSFVDICFAS). Residues 77-100 (TMVPKMLVNIQTQSKVITYAGCIT) are Extracellular-facing. Residues Cys-98 and Cys-190 are joined by a disulfide bond. Residues 101 to 121 (QMCFFVLFIVLDSLLLTVMAY) form a helical membrane-spanning segment. At 122 to 140 (DQFVAICHPLHYTVIMSPQ) the chain is on the cytoplasmic side. A helical transmembrane segment spans residues 141-161 (LCGLLVLVSWIMSVLNSMLQS). Topologically, residues 162–198 (LVTLQLSFCTDLEIPHFFCELNEMIHLACSDTFVNNM) are extracellular. The helical transmembrane segment at 199 to 218 (VMHFAAVLLDGGPLVGILYS) threads the bilayer. The Cytoplasmic portion of the chain corresponds to 219 to 238 (YCRIVSSIRAISSTQGKYKA). A helical membrane pass occupies residues 239-259 (LSTCASHLSVVSIFYGTGLGV). Residues 260–272 (YLSSTMTQNLHST) are Extracellular-facing. Residues 273–293 (AVASVMYTVVTPMLNPFIYSL) form a helical membrane-spanning segment. Residues 294–310 (RNKDIKGALTQFFRGKQ) lie on the Cytoplasmic side of the membrane.

It belongs to the G-protein coupled receptor 1 family.

It localises to the cell membrane. Odorant receptor. The chain is Putative olfactory receptor 7A2 (OR7A2P) from Homo sapiens (Human).